The chain runs to 114 residues: C-X-C motif chemokine 5 (114 aa).

The signal sequence occupies residues M1 to S36. Intrachain disulfides connect C49-C75 and C51-C91.

This sequence belongs to the intercrine alpha (chemokine CxC) family. Monomer. Homodimer. In terms of processing, N-terminal processed forms ENA-78(8-78) and ENA-78(9-78) are produced by proteolytic cleavage after secretion from peripheral blood monocytes.

It localises to the secreted. Involved in neutrophil activation. In vitro, ENA-78(8-78) and ENA-78(9-78) show a threefold higher chemotactic activity for neutrophil granulocytes. In Homo sapiens (Human), this protein is C-X-C motif chemokine 5 (CXCL5).